Consider the following 85-residue polypeptide: Large ribosomal subunit protein bL31B (85 aa).

The protein belongs to the bacterial ribosomal protein bL31 family. Type B subfamily. In terms of assembly, part of the 50S ribosomal subunit.

The protein is Large ribosomal subunit protein bL31B of Micrococcus luteus (strain ATCC 4698 / DSM 20030 / JCM 1464 / CCM 169 / CCUG 5858 / IAM 1056 / NBRC 3333 / NCIMB 9278 / NCTC 2665 / VKM Ac-2230) (Micrococcus lysodeikticus).